A 209-amino-acid polypeptide reads, in one-letter code: Small ribosomal subunit protein mS23 (209 aa).

Belongs to the mitochondrion-specific ribosomal protein mS23 family. As to quaternary structure, component of the mitochondrial small ribosomal subunit.

The protein resides in the mitochondrion. The sequence is that of Small ribosomal subunit protein mS23 (rsm25) from Sclerotinia sclerotiorum (strain ATCC 18683 / 1980 / Ss-1) (White mold).